The primary structure comprises 331 residues: Phenylalanine--tRNA ligase alpha subunit (331 aa).

E254 is a Mg(2+) binding site.

This sequence belongs to the class-II aminoacyl-tRNA synthetase family. Phe-tRNA synthetase alpha subunit type 1 subfamily. Tetramer of two alpha and two beta subunits. Mg(2+) is required as a cofactor.

It localises to the cytoplasm. The enzyme catalyses tRNA(Phe) + L-phenylalanine + ATP = L-phenylalanyl-tRNA(Phe) + AMP + diphosphate + H(+). The chain is Phenylalanine--tRNA ligase alpha subunit from Blochmanniella pennsylvanica (strain BPEN).